Reading from the N-terminus, the 249-residue chain is Large ribosomal subunit protein uL4 (249 aa).

This sequence belongs to the universal ribosomal protein uL4 family. In terms of assembly, part of the 50S ribosomal subunit.

Its function is as follows. One of the primary rRNA binding proteins, this protein initially binds near the 5'-end of the 23S rRNA. It is important during the early stages of 50S assembly. It makes multiple contacts with different domains of the 23S rRNA in the assembled 50S subunit and ribosome. Forms part of the polypeptide exit tunnel. This chain is Large ribosomal subunit protein uL4, found in Methanoculleus marisnigri (strain ATCC 35101 / DSM 1498 / JR1).